The primary structure comprises 347 residues: Protein RecA (347 aa).

An ATP-binding site is contributed by 66 to 73 (GPESSGKT).

It belongs to the RecA family.

The protein resides in the cytoplasm. Its function is as follows. Can catalyze the hydrolysis of ATP in the presence of single-stranded DNA, the ATP-dependent uptake of single-stranded DNA by duplex DNA, and the ATP-dependent hybridization of homologous single-stranded DNAs. It interacts with LexA causing its activation and leading to its autocatalytic cleavage. The chain is Protein RecA from Methylococcus capsulatus (strain ATCC 33009 / NCIMB 11132 / Bath).